A 370-amino-acid chain; its full sequence is Glutamate 5-kinase (370 aa).

Lysine 11 contacts ATP. Positions 52, 139, and 151 each coordinate substrate. Residues 171–172 (TD) and 213–219 (TGGMATK) each bind ATP. In terms of domain architecture, PUA spans 278 to 356 (TGKLLLDAGA…DQIVQILGYE (79 aa)).

It belongs to the glutamate 5-kinase family.

The protein localises to the cytoplasm. It carries out the reaction L-glutamate + ATP = L-glutamyl 5-phosphate + ADP. The protein operates within amino-acid biosynthesis; L-proline biosynthesis; L-glutamate 5-semialdehyde from L-glutamate: step 1/2. Its function is as follows. Catalyzes the transfer of a phosphate group to glutamate to form L-glutamate 5-phosphate. The sequence is that of Glutamate 5-kinase from Synechococcus sp. (strain ATCC 27144 / PCC 6301 / SAUG 1402/1) (Anacystis nidulans).